Reading from the N-terminus, the 330-residue chain is Anthranilate phosphoribosyltransferase (330 aa).

5-phospho-alpha-D-ribose 1-diphosphate is bound by residues glycine 75, 78–79, threonine 83, 85–88, 103–111, and alanine 115; these read GD, NVST, and KHGNRAASS. Glycine 75 provides a ligand contact to anthranilate. Serine 87 is a Mg(2+) binding site. Anthranilate is bound at residue asparagine 106. Position 161 (arginine 161) interacts with anthranilate. Aspartate 220 and glutamate 221 together coordinate Mg(2+).

The protein belongs to the anthranilate phosphoribosyltransferase family. Homodimer. It depends on Mg(2+) as a cofactor.

It carries out the reaction N-(5-phospho-beta-D-ribosyl)anthranilate + diphosphate = 5-phospho-alpha-D-ribose 1-diphosphate + anthranilate. Its pathway is amino-acid biosynthesis; L-tryptophan biosynthesis; L-tryptophan from chorismate: step 2/5. In terms of biological role, catalyzes the transfer of the phosphoribosyl group of 5-phosphorylribose-1-pyrophosphate (PRPP) to anthranilate to yield N-(5'-phosphoribosyl)-anthranilate (PRA). The polypeptide is Anthranilate phosphoribosyltransferase (Novosphingobium aromaticivorans (strain ATCC 700278 / DSM 12444 / CCUG 56034 / CIP 105152 / NBRC 16084 / F199)).